Here is a 391-residue protein sequence, read N- to C-terminus: tRNA (cytosine(38)-C(5))-methyltransferase (391 aa).

An SAM-dependent MTase C5-type domain is found at 4–391 (LRVLELYSGV…VAKLIKILYE (388 aa)). Residues 13 to 15 (VGG), aspartate 34, 57 to 58 (IE), and serine 76 each bind S-adenosyl-L-methionine. Cysteine 79 is a catalytic residue. Residue serine 376 participates in S-adenosyl-L-methionine binding.

This sequence belongs to the class I-like SAM-binding methyltransferase superfamily. C5-methyltransferase family. As to expression, ubiquitous. Higher expression in testis, ovary and thymus and at much lower levels in spleen, prostate, colon, small intestine, and peripheral blood leukocytes.

It is found in the cytoplasm. The catalysed reaction is cytidine(38) in tRNA + S-adenosyl-L-methionine = 5-methylcytidine(38) in tRNA + S-adenosyl-L-homocysteine + H(+). Functionally, specifically methylates cytosine 38 in the anticodon loop of tRNA(Asp). Has higher activity on tRNA(Asp) modified with queuosine at position 34. The protein is tRNA (cytosine(38)-C(5))-methyltransferase (TRDMT1) of Homo sapiens (Human).